Here is an 88-residue protein sequence, read N- to C-terminus: Beta-insect excitatory toxin 2 (88 aa).

The signal sequence occupies residues 1 to 18 (MKFLLLFLVVLPIMGVLG). One can recognise an LCN-type CS-alpha/beta domain in the interval 20-83 (KNGYAVDSSG…ISDTRKSYCD (64 aa)). 4 disulfides stabilise this stretch: cysteine 34/cysteine 55, cysteine 40/cysteine 60, cysteine 44/cysteine 62, and cysteine 56/cysteine 82.

This sequence belongs to the long (4 C-C) scorpion toxin superfamily. Sodium channel inhibitor family. Beta subfamily. As to expression, expressed by the venom gland.

The protein resides in the secreted. Functionally, excitatory insect beta-toxins induce a spastic paralysis. They bind voltage-independently at site-4 of sodium channels (Nav) and shift the voltage of activation toward more negative potentials thereby affecting sodium channel activation and promoting spontaneous and repetitive firing. This toxin is active only on insects. The sequence is that of Beta-insect excitatory toxin 2 from Androctonus australis (Sahara scorpion).